The primary structure comprises 108 residues: Peptidyl-prolyl cis-trans isomerase FKBP1A (108 aa).

A PPIase FKBP-type domain is found at 20 to 108; sequence GQTCVVHYTG…IFDVELLKLE (89 aa). An N6-acetyllysine; alternate modification is found at Lys53. Lys53 is subject to N6-succinyllysine; alternate.

Belongs to the FKBP-type PPIase family. FKBP1 subfamily. In terms of assembly, interacts with TGFBR1; prevents TGFBR1 phosphorylation by TGFBR2 and stabilizes it in the inactive conformation. Interacts with ACVR1B and SMAD7. Identified in a complex composed of RYR1, PDE4D, PKA, FKBP1A and protein phosphatase 1 (PP1). Interacts directly with RYR2 and RYR3. Interacts with GLMN; rapamycin and FK506 abolish the interaction with GLMN in a dose dependent manner. Interacts directly with RYR1.

It is found in the cytoplasm. Its subcellular location is the cytosol. It localises to the sarcoplasmic reticulum membrane. The enzyme catalyses [protein]-peptidylproline (omega=180) = [protein]-peptidylproline (omega=0). Its activity is regulated as follows. Inhibited by both FK506 and rapamycin. Its function is as follows. Keeps in an inactive conformation TGFBR1, the TGF-beta type I serine/threonine kinase receptor, preventing TGF-beta receptor activation in absence of ligand. May modulate the RYR1 calcium channel activity. PPIases accelerate the folding of proteins. It catalyzes the cis-trans isomerization of proline imidic peptide bonds in oligopeptides. This Bos taurus (Bovine) protein is Peptidyl-prolyl cis-trans isomerase FKBP1A (FKBP1A).